Consider the following 994-residue polypeptide: Bifunctional glutamine synthetase adenylyltransferase/adenylyl-removing enzyme (994 aa).

Positions 1–487 (MVVTKLATQR…LHTKLFYQPL (487 aa)) are adenylyl removase. Positions 492–994 (GPTGLEIAHG…KAVVRKVFGS (503 aa)) are adenylyl transferase.

The protein belongs to the GlnE family. Mg(2+) serves as cofactor.

The enzyme catalyses [glutamine synthetase]-O(4)-(5'-adenylyl)-L-tyrosine + phosphate = [glutamine synthetase]-L-tyrosine + ADP. It catalyses the reaction [glutamine synthetase]-L-tyrosine + ATP = [glutamine synthetase]-O(4)-(5'-adenylyl)-L-tyrosine + diphosphate. Its function is as follows. Involved in the regulation of glutamine synthetase GlnA, a key enzyme in the process to assimilate ammonia. When cellular nitrogen levels are high, the C-terminal adenylyl transferase (AT) inactivates GlnA by covalent transfer of an adenylyl group from ATP to specific tyrosine residue of GlnA, thus reducing its activity. Conversely, when nitrogen levels are low, the N-terminal adenylyl removase (AR) activates GlnA by removing the adenylyl group by phosphorolysis, increasing its activity. The regulatory region of GlnE binds the signal transduction protein PII (GlnB) which indicates the nitrogen status of the cell. The chain is Bifunctional glutamine synthetase adenylyltransferase/adenylyl-removing enzyme from Mycobacterium tuberculosis (strain CDC 1551 / Oshkosh).